The sequence spans 258 residues: DNA repair protein RecO (258 aa).

Belongs to the RecO family.

Functionally, involved in DNA repair and RecF pathway recombination. The polypeptide is DNA repair protein RecO (Oceanobacillus iheyensis (strain DSM 14371 / CIP 107618 / JCM 11309 / KCTC 3954 / HTE831)).